The chain runs to 423 residues: Histidine--tRNA ligase (423 aa).

Belongs to the class-II aminoacyl-tRNA synthetase family. As to quaternary structure, homodimer.

The protein localises to the cytoplasm. The enzyme catalyses tRNA(His) + L-histidine + ATP = L-histidyl-tRNA(His) + AMP + diphosphate + H(+). The polypeptide is Histidine--tRNA ligase (Shewanella loihica (strain ATCC BAA-1088 / PV-4)).